The sequence spans 61 residues: Small ribosomal subunit protein uS14 (61 aa).

Zn(2+) contacts are provided by Cys24, Cys27, Cys40, and Cys43.

The protein belongs to the universal ribosomal protein uS14 family. Zinc-binding uS14 subfamily. In terms of assembly, part of the 30S ribosomal subunit. Contacts proteins S3 and S10. Zn(2+) is required as a cofactor.

In terms of biological role, binds 16S rRNA, required for the assembly of 30S particles and may also be responsible for determining the conformation of the 16S rRNA at the A site. This is Small ribosomal subunit protein uS14 from Caldicellulosiruptor bescii (strain ATCC BAA-1888 / DSM 6725 / KCTC 15123 / Z-1320) (Anaerocellum thermophilum).